The sequence spans 217 residues: Ras-like protein (217 aa).

GTP is bound at residue 17–24; sequence GGGGVGKS. The Effector region motif lies at 39 to 47; it reads YDPTIEDSY. Residues 64-68 and 123-126 each bind GTP; these read DTAGQ and NKCD. The disordered stretch occupies residues 181-200; it reads TGRMMTGGGGGGPPGTYAGK. Gly residues predominate over residues 185–194; that stretch reads MTGGGGGGPP. 2 S-palmitoyl cysteine lipidation sites follow: Cys210 and Cys211. At Cys214 the chain carries Cysteine methyl ester. The S-geranylgeranyl cysteine moiety is linked to residue Cys214. Positions 215 to 217 are cleaved as a propeptide — removed in mature form; it reads VVL.

It belongs to the small GTPase superfamily. Ras family.

It is found in the cell membrane. The catalysed reaction is GTP + H2O = GDP + phosphate + H(+). With respect to regulation, alternates between an inactive form bound to GDP and an active form bound to GTP. Activated by a guanine nucleotide-exchange factor (GEF) and inactivated by a GTPase-activating protein (GAP). This is Ras-like protein from Lentinula edodes (Shiitake mushroom).